A 246-amino-acid chain; its full sequence is 1-(5-phosphoribosyl)-5-[(5-phosphoribosylamino)methylideneamino] imidazole-4-carboxamide isomerase (246 aa).

D8 acts as the Proton acceptor in catalysis. The Proton donor role is filled by D129.

This sequence belongs to the HisA/HisF family.

The protein localises to the cytoplasm. The enzyme catalyses 1-(5-phospho-beta-D-ribosyl)-5-[(5-phospho-beta-D-ribosylamino)methylideneamino]imidazole-4-carboxamide = 5-[(5-phospho-1-deoxy-D-ribulos-1-ylimino)methylamino]-1-(5-phospho-beta-D-ribosyl)imidazole-4-carboxamide. Its pathway is amino-acid biosynthesis; L-histidine biosynthesis; L-histidine from 5-phospho-alpha-D-ribose 1-diphosphate: step 4/9. The polypeptide is 1-(5-phosphoribosyl)-5-[(5-phosphoribosylamino)methylideneamino] imidazole-4-carboxamide isomerase (Methylocella silvestris (strain DSM 15510 / CIP 108128 / LMG 27833 / NCIMB 13906 / BL2)).